Reading from the N-terminus, the 340-residue chain is Oxygen-dependent coproporphyrinogen-III oxidase (340 aa).

The span at 1–14 (MTVSPTTQPQTNHS) shows a compositional bias: polar residues. A disordered region spans residues 1–22 (MTVSPTTQPQTNHSLPPADAKQ). S109 is a binding site for substrate. Residues H113 and H123 each contribute to the a divalent metal cation site. H123 (proton donor) is an active-site residue. 125 to 127 (NYR) contributes to the substrate binding site. A divalent metal cation-binding residues include H157 and H187. The interval 278–313 (YVEFNLVYDRGTIFGLQTNGRTESILMSLPPLVRWQ) is important for dimerization. Residue 296–298 (NGR) coordinates substrate.

The protein belongs to the aerobic coproporphyrinogen-III oxidase family. Homodimer. The cofactor is a divalent metal cation.

It localises to the cytoplasm. It carries out the reaction coproporphyrinogen III + O2 + 2 H(+) = protoporphyrinogen IX + 2 CO2 + 2 H2O. It participates in porphyrin-containing compound metabolism; protoporphyrin-IX biosynthesis; protoporphyrinogen-IX from coproporphyrinogen-III (O2 route): step 1/1. Involved in the heme and chlorophyll biosynthesis. Catalyzes the aerobic oxidative decarboxylation of propionate groups of rings A and B of coproporphyrinogen-III to yield the vinyl groups in protoporphyrinogen-IX. In Synechocystis sp. (strain ATCC 27184 / PCC 6803 / Kazusa), this protein is Oxygen-dependent coproporphyrinogen-III oxidase.